We begin with the raw amino-acid sequence, 260 residues long: Probable 6-oxopurine nucleoside phosphorylase (260 aa).

Phosphate-binding positions include Ser-9 and 49–50 (RH). Residue Met-182 participates in substrate binding. Residue Thr-183 participates in phosphate binding. 206-208 (NMA) is a substrate binding site.

Belongs to the PNP/MTAP phosphorylase family. MTAP subfamily. Homohexamer. Dimer of a homotrimer.

The enzyme catalyses a purine D-ribonucleoside + phosphate = a purine nucleobase + alpha-D-ribose 1-phosphate. The protein operates within purine metabolism; purine nucleoside salvage. Functionally, purine nucleoside phosphorylase which is highly specific for 6-oxopurine nucleosides. Cleaves guanosine or inosine to respective bases and sugar-1-phosphate molecules. Involved in purine salvage. This is Probable 6-oxopurine nucleoside phosphorylase from Moorella thermoacetica (strain ATCC 39073 / JCM 9320).